Here is a 604-residue protein sequence, read N- to C-terminus: MMRAVWEALAALAAVACLVGAVRGGPGLSMFAGQAAQPDPCSDENGHPRRCIPDFVNAAFGKDVRVSSTCGRPPARYCVVSERGEERLRSCHLCNSSDPKKAHPPAFLTDLNNPHNLTCWQSENYLQFPHNVTLTLSLGKKFEVTYVSLQFCSPRPESMAIYKSMDYGRTWVPFQFYSTQCRKMYNRPHRAPITKQNEQEAVCTDSHTDMRPLSGGLIAFSTLDGRPSAHDFDNSPVLQDWVTATDIRVAFSRLHTFGDENEDDSELARDSYYYAVSDLQVGGRCKCNGHAARCVRDRDDSLVCDCRHNTAGPECDRCKPFHYDRPWQRATAREANECVACNCNLHARRCRFNMELYKLSGRKSGGVCLNCRHNTAGRHCHYCKEGFYRDMGKPITHRKACKACDCHPVGAAGKTCNQTTGQCPCKDGVTGITCNRCAKGYQQSRSPIAPCIKIPVAPPTTAASSVEEPEDCDSYCKASKGKLKMNMKKYCRKDYAVQIHILKADKAGDWWKFTVNIISVYKQGTSRIRRGDQSLWIRSRDIACKCPKIKPLKKYLLLGNAEDSPDQSGIVADKSSLVIQWRDTWARRLRKFQQREKKGKCKKA.

The N-terminal stretch at 1 to 24 (MMRAVWEALAALAAVACLVGAVRG) is a signal peptide. The Laminin N-terminal domain occupies 47-284 (HPRRCIPDFV…AVSDLQVGGR (238 aa)). Asparagine 95, asparagine 116, and asparagine 131 each carry an N-linked (GlcNAc...) asparagine glycan. 15 disulfide bridges follow: cysteine 119–cysteine 152, cysteine 285–cysteine 294, cysteine 287–cysteine 304, cysteine 306–cysteine 315, cysteine 318–cysteine 338, cysteine 341–cysteine 350, cysteine 343–cysteine 368, cysteine 371–cysteine 380, cysteine 383–cysteine 401, cysteine 404–cysteine 416, cysteine 406–cysteine 423, cysteine 425–cysteine 434, cysteine 437–cysteine 451, cysteine 472–cysteine 544, and cysteine 491–cysteine 601. Laminin EGF-like domains are found at residues 285 to 340 (CKCN…ECVA), 341 to 403 (CNCN…ACKA), and 404 to 453 (CDCH…PCIK). Asparagine 417 is a glycosylation site (N-linked (GlcNAc...) asparagine). The region spanning 472-601 (CDSYCKASKG…FQQREKKGKC (130 aa)) is the NTR domain. The Cell attachment site signature appears at 530–532 (RGD).

As to quaternary structure, binds to its receptors; DCC, UNC5A, UNC5B, UNC5C and probably UNC5D. Binds to its receptor; DSCAM. Interacts with APP. In the embryo, widely expressed in the developing nervous system and in mesodermal tissues.

It localises to the secreted. Its subcellular location is the cytoplasm. Its function is as follows. Netrins control guidance of CNS commissural axons and peripheral motor axons. Its association with either DCC or some UNC5 receptors will lead to axon attraction or repulsion, respectively. Binding to UNC5C might cause dissociation of UNC5C from polymerized TUBB3 in microtubules and thereby lead to increased microtubule dynamics and axon repulsion. Involved in dorsal root ganglion axon projection towards the spinal cord. It also serves as a survival factor via its association with its receptors which prevent the initiation of apoptosis. Involved in colorectal tumorigenesis by regulating apoptosis. The sequence is that of Netrin-1 (Ntn1) from Mus musculus (Mouse).